A 289-amino-acid polypeptide reads, in one-letter code: Protein SET (289 aa).

The interval 1–42 (MAPKRQSAILPQPKKPRPVAAPKLEDKSASPGLPKGEKEQQE) is disordered. Position 2 is a n,N,N-trimethylalanine (Ala2). Ser7 bears the Phosphoserine mark. Pro11 is modified (N6-acetyllysine). Lys15 carries the phosphoserine modification. Lys23 is modified (N6-acetyllysine). Phosphoserine occurs at positions 24, 28, and 62. Positions 31 to 77 (PGLPKGEKEQQEAIEHIDEVQNEIDRLNEQASEEILKVEQKYNKLRQ) are dimerization. Lys67 is subject to N6-acetyllysine. An earmuff domain region spans residues 78–224 (PFFQKRSELI…ELGEVIKDDI (147 aa)). Residue Tyr145 is modified to Phosphotyrosine. Lys149 bears the N6-acetyllysine mark. Residue Lys153 forms a Glycyl lysine isopeptide (Lys-Gly) (interchain with G-Cter in ubiquitin) linkage. Disordered stretches follow at residues 157–206 (LNES…TWFT) and 235–289 (PDMD…GEDD). Residues 168 to 180 (TEIKWKSGKDLTK) show a composition bias toward basic and acidic residues. An N6-acetyllysine modification is found at Lys171. Over residues 236-289 (DMDDEEGEAEDDDDDDEEEEGLEDIDEEGDEDEGEEDDDEDEGEEGEEDEGEDD) the composition is skewed to acidic residues.

This sequence belongs to the nucleosome assembly protein (NAP) family. Headphone-shaped homodimer. Isoform 1 and isoform 2 interact directly with each other and with ANP32A within the tripartite INHAT (inhibitor of acetyltransferases) complex. Isoform 1 and isoform 2 interact also with histones. Isoform 2 is a omponent of the SET complex, composed of at least ANP32A, APEX1, HMGB2, NME1, SET and TREX1, but not NME2 or TREX2. Within this complex, directly interacts with ANP32A, NME1, HMGB2 and TREX1; the interaction with ANP32A is enhanced after cleavage. Interacts with APBB1, CHTOP, SETBP1, SGO1. Isoform 2 is phosphorylated on Ser-15 and Ser-24. In terms of processing, isoform 2 is acetylated on Lys-11. Post-translationally, some glutamate residues are glycylated by TTLL8. This modification occurs exclusively on glutamate residues and results in a glycine chain on the gamma-carboxyl group. N-terminus of isoform 1 is methylated by METTL11A/NTM1. Mainly trimethylated. In terms of processing, cleaved after Lys-176 by GZMA. The cleavage inhibits its nucleosome assembly activity and disrupts the inhibition on NME1. As to expression, widely expressed, with higher expression in brain, thymus, spleen and bone marrow, and lower expression in heart, liver and muscle.

It localises to the cytoplasm. It is found in the cytosol. Its subcellular location is the endoplasmic reticulum. The protein localises to the nucleus. The protein resides in the nucleoplasm. In terms of biological role, multitasking protein, involved in apoptosis, transcription, nucleosome assembly and histone chaperoning. Isoform 2 anti-apoptotic activity is mediated by inhibition of the GZMA-activated DNase, NME1. In the course of cytotoxic T-lymphocyte (CTL)-induced apoptosis, GZMA cleaves SET, disrupting its binding to NME1 and releasing NME1 inhibition. Isoform 1 and isoform 2 are potent inhibitors of protein phosphatase 2A. Isoform 1 and isoform 2 inhibit EP300/CREBBP and PCAF-mediated acetylation of histones (HAT) and nucleosomes, most probably by masking the accessibility of lysines of histones to the acetylases. The predominant target for inhibition is histone H4. HAT inhibition leads to silencing of HAT-dependent transcription and prevents active demethylation of DNA. Both isoforms stimulate DNA replication of the adenovirus genome complexed with viral core proteins; however, isoform 2 specific activity is higher. The chain is Protein SET (Set) from Rattus norvegicus (Rat).